A 526-amino-acid polypeptide reads, in one-letter code: Calcium-dependent protein kinase 28 (526 aa).

Residues Met1–Val37 form a disordered region. Residues Tyr49–Ile307 form the Protein kinase domain. Residues Leu55 to Thr63 and Lys78 contribute to the ATP site. Residue Asp173 is the Proton acceptor of the active site. Residues Ala313–Ile343 are autoinhibitory domain. EF-hand domains lie at Glu350–Asp385, Leu386–Leu421, Glu422–Ser457, and His460–Gly491. Residues Asp363, Asp365, Ser367, Thr369, Glu374, Asp399, Asp401, Ser403, Thr405, Glu410, Asp435, Asp437, Ser439, Glu446, Asp469, Asn471, Asp473, Gln475, and Glu480 each contribute to the Ca(2+) site.

It belongs to the protein kinase superfamily. Ser/Thr protein kinase family. CDPK subfamily.

It catalyses the reaction L-seryl-[protein] + ATP = O-phospho-L-seryl-[protein] + ADP + H(+). It carries out the reaction L-threonyl-[protein] + ATP = O-phospho-L-threonyl-[protein] + ADP + H(+). With respect to regulation, activated by calcium. Autophosphorylation may play an important role in the regulation of the kinase activity. Functionally, may play a role in signal transduction pathways that involve calcium as a second messenger. The polypeptide is Calcium-dependent protein kinase 28 (Oryza sativa subsp. japonica (Rice)).